The chain runs to 157 residues: Protein FAM219A (157 aa).

The residue at position 1 (Met-1) is an N-acetylmethionine. The segment at 1-103 (MMEEIDRFQD…SRYSSSGYSS (103 aa)) is disordered. The span at 17–33 (SDRDCDAREEKQRELAR) shows a compositional bias: basic and acidic residues. The span at 38 to 52 (KNGSMGSPVNQQPKK) shows a compositional bias: polar residues. A phosphoserine mark is found at Ser-44 and Ser-74. Thr-85 carries the post-translational modification Phosphothreonine. Ser-87 and Ser-94 each carry phosphoserine. The segment covering 94–103 (SRYSSSGYSS) has biased composition (low complexity).

The protein belongs to the FAM219 family.

The protein is Protein FAM219A (Fam219a) of Mus musculus (Mouse).